We begin with the raw amino-acid sequence, 156 residues long: Envelope glycoprotein L (156 aa).

The signal sequence occupies residues 1–16 (MSPLVAVLVFFSAALG). Residues 21–141 (GVAGNPHGLD…KELGEVAVHK (121 aa)) form an interaction with gH region. The 107-residue stretch at 50 to 156 (ELEWDDEDHP…LRYNGGPPAE (107 aa)) folds into the gL alphaherpesvirus-type domain. A disulfide bridge connects residues C71 and C95.

The protein belongs to the herpesviridae glycoprotein L (gL) family. Alphaherpesvirinae gL subfamily. In terms of assembly, interacts with glycoprotein H (gH); this interaction is necessary for the correct processing and cell surface expression of gH. The heterodimer gH/gL seems to interact with gB trimers during fusion. O-glycosylated, and sialylated.

Its subcellular location is the virion membrane. The protein localises to the host cell membrane. It localises to the host Golgi apparatus. It is found in the host trans-Golgi network. The heterodimer glycoprotein H-glycoprotein L is required for the fusion of viral and plasma membranes leading to virus entry into the host cell. Acts as a functional inhibitor of gH and maintains gH in an inhibited form. Upon binding to host integrins, gL dissociates from gH leading to activation of the viral fusion glycoproteins gB and gH. The polypeptide is Envelope glycoprotein L (Sus scrofa (Pig)).